Consider the following 3797-residue polypeptide: A-kinase anchor protein 9 (3797 aa).

The tract at residues 1 to 140 (MEDEERQRKL…SSEQGAQSSQ (140 aa)) is disordered. 2 stretches are compositionally biased toward polar residues: residues 50 to 65 (HTDQ…SSQR) and 92 to 108 (EIST…NGCN). Over residues 115–124 (KPTDPLREEE) the composition is skewed to basic and acidic residues. A Phosphoserine modification is found at S139. Coiled coils occupy residues 140–607 (QTCL…LRTQ) and 640–976 (IHYK…LLAN). S1288 is modified (phosphoserine). Disordered regions lie at residues 1643 to 1668 (STQT…LERS), 2323 to 2343 (VVST…EESF), and 2419 to 2454 (SDNL…ASRT). 2 stretches are compositionally biased toward basic and acidic residues: residues 1648–1668 (DGHD…LERS) and 2328–2343 (QQRE…EESF). A coiled-coil region spans residues 1808–2377 (SRLQAAVEKL…MTHMNNVLKE (570 aa)). Over residues 2438–2454 (KQTSLTRLQESPEASRT) the composition is skewed to polar residues. Residues 2498–2510 (DLQRSLEKFAAAL) form a PKA-RII subunit binding domain region. 2 disordered regions span residues 2604–2695 (LEEA…SSSG) and 3271–3296 (MEKD…QKKM). Residues 2606 to 2615 (EAEERPEEGG) show a composition bias toward acidic residues. Residues 2642–2669 (PLTEAKEKLSYSLEKEKRTGEQESREAP) show a composition bias toward basic and acidic residues. Residues 2975 to 3325 (LQKADRRSLL…QVYKLDLEGK (351 aa)) adopt a coiled-coil conformation. Positions 3279-3294 (QKTLQTEQEANTQGQK) are enriched in polar residues. S3732, S3755, and S3787 each carry phosphoserine.

Interacts with the regulatory region of protein kinase N (PKN), protein phosphatase 2A (PP2A), protein phosphatase 1 (PP1) and the immature non-phosphorylated form of PKC epsilon. Interacts with CIP4 and FNBP1. Interacts with chloride intracellular channel proteins CLIC1, CLIC4 and CLIC5. CSNK1D binding promotes its centrosomal subcellular location. Interacts with GM130/GOLGA2; leading to recruitment to the Golgi apparatus. Interacts with KCNQ1; targets protein kinase A (PKA) catalytic and regulatory subunits and protein phosphatase 1 (PP1), to the heterodimer KCNQ1-KCNE1. Interacts with PDE4DIP isoform 2; this interaction stabilizes both proteins. In complex with PDE4DIP isoform 2, recruits CAMSAP2 to the Golgi apparatus. Forms a pericentrosomal complex with CDK5RAP2, EB1/MAPRE1 and PDE4DIP isoform 2; within this complex, MAPRE1 binding to CDK5RAP2 may be mediated by PDE4DIP. Interacts with MAPRE1 and MAPRE3. Interacts (via C-terminus) with CAMSAP2; this interaction is much stronger in the presence of PDE4DIP isoform 2. Interacts with CAMSAP3. Interacts (via C-terminus) with the gamma-tubulin ring complex (gamma-TuRC), composed of gamma-tubulin, TUBGCP2, TUBGCP3, TUBGCP4, TUBGCP5 and TUBGCP6.

Its subcellular location is the golgi apparatus. It localises to the cytoplasm. The protein localises to the cytoskeleton. It is found in the microtubule organizing center. The protein resides in the centrosome. Its function is as follows. Scaffolding protein that assembles several protein kinases and phosphatases on the centrosome and Golgi apparatus. Required to maintain the integrity of the Golgi apparatus. Required for microtubule nucleation at the cis-side of the Golgi apparatus. Required for association of the centrosomes with the poles of the bipolar mitotic spindle during metaphase. In complex with PDE4DIP isoform 2/MMG8/SMYLE, recruits CAMSAP2 to the Golgi apparatus and tethers non-centrosomal minus-end microtubules to the Golgi, an important step for polarized cell movement. In complex with PDE4DIP isoform 2, EB1/MAPRE1 and CDK5RAP2, contributes to microtubules nucleation and extension also from the centrosome to the cell periphery. The sequence is that of A-kinase anchor protein 9 (Akap9) from Mus musculus (Mouse).